The following is an 812-amino-acid chain: Lon protease (812 aa).

The 194-residue stretch at 22 to 215 (YAVLPLRDIV…KALSFMEAEI (194 aa)) folds into the Lon N-terminal domain. Residue 367–374 (GPPGVGKT) participates in ATP binding. Residues 602 to 783 (EDQVGVVTGL…GEVLKHTLVR (182 aa)) enclose the Lon proteolytic domain. Active-site residues include Ser689 and Lys732. A disordered region spans residues 787-812 (PIEWTEQENPTAVPPVEDEAGASLAH).

The protein belongs to the peptidase S16 family. In terms of assembly, homohexamer. Organized in a ring with a central cavity.

It is found in the cytoplasm. It carries out the reaction Hydrolysis of proteins in presence of ATP.. ATP-dependent serine protease that mediates the selective degradation of mutant and abnormal proteins as well as certain short-lived regulatory proteins. Required for cellular homeostasis and for survival from DNA damage and developmental changes induced by stress. Degrades polypeptides processively to yield small peptide fragments that are 5 to 10 amino acids long. Binds to DNA in a double-stranded, site-specific manner. This is Lon protease from Brucella suis biovar 1 (strain 1330).